The chain runs to 147 residues: Large ribosomal subunit protein uL13 (147 aa).

Belongs to the universal ribosomal protein uL13 family. In terms of assembly, part of the 50S ribosomal subunit.

This protein is one of the early assembly proteins of the 50S ribosomal subunit, although it is not seen to bind rRNA by itself. It is important during the early stages of 50S assembly. The polypeptide is Large ribosomal subunit protein uL13 (Streptomyces griseus subsp. griseus (strain JCM 4626 / CBS 651.72 / NBRC 13350 / KCC S-0626 / ISP 5235)).